We begin with the raw amino-acid sequence, 409 residues long: Arginine deiminase (409 aa).

Catalysis depends on C399, which acts as the Amidino-cysteine intermediate.

Belongs to the arginine deiminase family.

It localises to the cytoplasm. It carries out the reaction L-arginine + H2O = L-citrulline + NH4(+). Its pathway is amino-acid degradation; L-arginine degradation via ADI pathway; carbamoyl phosphate from L-arginine: step 1/2. The sequence is that of Arginine deiminase from Borreliella afzelii (strain PKo) (Borrelia afzelii).